The sequence spans 298 residues: Protein FAM221A (298 aa).

Residues 241–257 (SSPETLTDVGTSSQVSS) are compositionally biased toward polar residues. A disordered region spans residues 241–263 (SSPETLTDVGTSSQVSSLRRPEE).

Belongs to the FAM221 family.

The protein is Protein FAM221A (FAM221A) of Homo sapiens (Human).